Here is a 224-residue protein sequence, read N- to C-terminus: 7-cyano-7-deazaguanine synthase (224 aa).

Residue 12 to 22 (MSGGMDSTLGA) participates in ATP binding. 4 residues coordinate Zn(2+): Cys-191, Cys-199, Cys-202, and Cys-205.

This sequence belongs to the QueC family. Zn(2+) serves as cofactor.

It catalyses the reaction 7-carboxy-7-deazaguanine + NH4(+) + ATP = 7-cyano-7-deazaguanine + ADP + phosphate + H2O + H(+). Its pathway is purine metabolism; 7-cyano-7-deazaguanine biosynthesis. Catalyzes the ATP-dependent conversion of 7-carboxy-7-deazaguanine (CDG) to 7-cyano-7-deazaguanine (preQ(0)). In Sulfurimonas denitrificans (strain ATCC 33889 / DSM 1251) (Thiomicrospira denitrificans (strain ATCC 33889 / DSM 1251)), this protein is 7-cyano-7-deazaguanine synthase.